Reading from the N-terminus, the 684-residue chain is Glycine--tRNA ligase beta subunit (684 aa).

Belongs to the class-II aminoacyl-tRNA synthetase family. In terms of assembly, tetramer of two alpha and two beta subunits.

It is found in the cytoplasm. It catalyses the reaction tRNA(Gly) + glycine + ATP = glycyl-tRNA(Gly) + AMP + diphosphate. The chain is Glycine--tRNA ligase beta subunit from Pseudomonas savastanoi pv. phaseolicola (strain 1448A / Race 6) (Pseudomonas syringae pv. phaseolicola (strain 1448A / Race 6)).